We begin with the raw amino-acid sequence, 72 residues long: ATP synthase subunit c (72 aa).

2 consecutive transmembrane segments (helical) span residues 1–21 and 48–68; these read MSLG…GAGI and MFIG…FSFI.

The protein belongs to the ATPase C chain family. In terms of assembly, F-type ATPases have 2 components, F(1) - the catalytic core - and F(0) - the membrane proton channel. F(1) has five subunits: alpha(3), beta(3), gamma(1), delta(1), epsilon(1). F(0) has three main subunits: a(1), b(2) and c(10-14). The alpha and beta chains form an alternating ring which encloses part of the gamma chain. F(1) is attached to F(0) by a central stalk formed by the gamma and epsilon chains, while a peripheral stalk is formed by the delta and b chains.

The protein localises to the cell membrane. F(1)F(0) ATP synthase produces ATP from ADP in the presence of a proton or sodium gradient. F-type ATPases consist of two structural domains, F(1) containing the extramembraneous catalytic core and F(0) containing the membrane proton channel, linked together by a central stalk and a peripheral stalk. During catalysis, ATP synthesis in the catalytic domain of F(1) is coupled via a rotary mechanism of the central stalk subunits to proton translocation. In terms of biological role, key component of the F(0) channel; it plays a direct role in translocation across the membrane. A homomeric c-ring of between 10-14 subunits forms the central stalk rotor element with the F(1) delta and epsilon subunits. The polypeptide is ATP synthase subunit c (Bacillus caldotenax).